Here is a 142-residue protein sequence, read N- to C-terminus: Alpha-lactalbumin (142 aa).

The N-terminal stretch at 1 to 19 (MMSFVSLLLVGILFHATQA) is a signal peptide. The C-type lysozyme domain occupies 20 to 142 (EQLTKCEVFR…KLDQWLCEKL (123 aa)). Cystine bridges form between Cys-25-Cys-139, Cys-47-Cys-130, Cys-80-Cys-96, and Cys-92-Cys-110. Asn-64 is a glycosylation site (N-linked (GlcNAc...) asparagine). Ca(2+) is bound by residues Lys-98, Asp-101, Asp-103, Asp-106, and Asp-107.

Belongs to the glycosyl hydrolase 22 family. Lactose synthase (LS) is a heterodimer of a catalytic component, beta1,4-galactosyltransferase (beta4Gal-T1) and a regulatory component, alpha-lactalbumin (LA). In terms of tissue distribution, mammary gland specific. Secreted in milk.

It localises to the secreted. In terms of biological role, regulatory subunit of lactose synthase, changes the substrate specificity of galactosyltransferase in the mammary gland making glucose a good acceptor substrate for this enzyme. This enables LS to synthesize lactose, the major carbohydrate component of milk. In other tissues, galactosyltransferase transfers galactose onto the N-acetylglucosamine of the oligosaccharide chains in glycoproteins. This Bos taurus (Bovine) protein is Alpha-lactalbumin (LALBA).